Consider the following 323-residue polypeptide: MDSKYQCVKLNDGHFMPVLGFGTYAPAEVPKSKALEAVKLAIEAGFHHIDSAHVYNNEEQVGLAIRSKIADGSVKREDIFYTSKLWSNSHRPELVRPALERSLKNLQLDYVDLYLIHFPVSVKPGEEVIPKDENGKILFDTVDLCATWEAMEKCKDAGLAKSIGVSNFNHRLLEMILNKPGLKYKPVCNQVECHPYFNQRKLLDFCKSKDIVLVAYSALGSHREEPWVDPNSPVLLEDPVLCALAKKHKRTPALIALRYQLQRGVVVLAKSYNEQRIRQNVQVFEFQLTSEEMKAIDGLNRNVRYLTLDIFAGPPNYPFSDEY.

NADP(+)-binding positions include 20 to 24 (GFGTY) and Asp50. Position 24 (Tyr24) interacts with substrate. Residue Tyr55 is the Proton donor of the active site. Residue His117 coordinates substrate. Residues 166-167 (SN), Gln190, and 216-222 (YSALGSH) contribute to the NADP(+) site. His222 and Trp227 together coordinate substrate. Residue 270 to 280 (KSYNEQRIRQN) participates in NADP(+) binding.

Belongs to the aldo/keto reductase family. In terms of tissue distribution, expressed in fetal testes. Expressed in fetal and adult adrenal glands.

It localises to the cytoplasm. The protein resides in the cytosol. The enzyme catalyses a 3alpha-hydroxysteroid + NADP(+) = a 3-oxosteroid + NADPH + H(+). It carries out the reaction a 3alpha-hydroxysteroid + NAD(+) = a 3-oxosteroid + NADH + H(+). It catalyses the reaction 5alpha-androstane-3alpha,17beta-diol + NADP(+) = 17beta-hydroxy-5alpha-androstan-3-one + NADPH + H(+). The catalysed reaction is 5alpha-androstane-3alpha,17beta-diol + NAD(+) = 17beta-hydroxy-5alpha-androstan-3-one + NADH + H(+). The enzyme catalyses 5alpha-androstane-3alpha,17beta-diol + NAD(+) = androsterone + NADH + H(+). It carries out the reaction 17beta-estradiol + NADP(+) = estrone + NADPH + H(+). It catalyses the reaction 17beta-estradiol + NAD(+) = estrone + NADH + H(+). The catalysed reaction is (20S)-hydroxypregn-4-en-3-one + NADP(+) = progesterone + NADPH + H(+). The enzyme catalyses (20S)-hydroxypregn-4-en-3-one + NAD(+) = progesterone + NADH + H(+). It carries out the reaction androsterone + NADP(+) = 5alpha-androstan-3,17-dione + NADPH + H(+). It catalyses the reaction (3beta,5alpha,17beta)-3-hydroxy-androstan-17-yl sulfate + NADP(+) = 5alpha-dihydrotestosterone sulfate + NADPH + H(+). The catalysed reaction is (1R,2R)-1,2-dihydrobenzene-1,2-diol + NADP(+) = catechol + NADPH + H(+). The enzyme catalyses (S)-indan-1-ol + NAD(+) = indan-1-one + NADH + H(+). It carries out the reaction (S)-indan-1-ol + NADP(+) = indan-1-one + NADPH + H(+). Its pathway is steroid metabolism. With respect to regulation, inhibited by hexestrol with an IC(50) of 2.8 uM, 1,10-phenanthroline with an IC(50) of 2100 uM, 1,7-phenanthroline with an IC(50) of 1500 uM, flufenamic acid with an IC(50) of 0.9 uM, indomethacin with an IC(50) of 75 uM, ibuprofen with an IC(50) of 6.9 uM, lithocholic acid with an IC(50) of 0.07 uM, ursodeoxycholic acid with an IC(50) of 0.08 uM and chenodeoxycholic acid with an IC(50) of 0.13 uM. The oxidation reaction is inhibited by low micromolar concentrations of NADPH. Functionally, cytosolic aldo-keto reductase that catalyzes the NADH and NADPH-dependent reduction of ketosteroids to hydroxysteroids. Most probably acts as a reductase in vivo since the oxidase activity measured in vitro is inhibited by physiological concentrations of NADPH. Displays a broad positional specificity acting on positions 3, 17 and 20 of steroids and regulates the metabolism of hormones like estrogens and androgens. Works in concert with the 5-alpha/5-beta-steroid reductases to convert steroid hormones into the 3-alpha/5-alpha and 3-alpha/5-beta-tetrahydrosteroids. Catalyzes the inactivation of the most potent androgen 5-alpha-dihydrotestosterone (5-alpha-DHT) to 5-alpha-androstane-3-alpha,17-beta-diol (3-alpha-diol). Also specifically able to produce 17beta-hydroxy-5alpha-androstan-3-one/5alphaDHT. May also reduce conjugated steroids such as 5alpha-dihydrotestosterone sulfate. Displays affinity for bile acids. The protein is Aldo-keto reductase family 1 member C2 (AKR1C2) of Homo sapiens (Human).